A 272-amino-acid chain; its full sequence is Centromere protein V-like protein 1 (272 aa).

Basic residues predominate over residues 1–17 (MGRVRNRATAQRRRRKR). Disordered regions lie at residues 1–23 (MGRVRNRATAQRRRRKRPGDPPA) and 65–95 (RRVRKAGPRDLLPSAPTPDPPGPAPSPKDLD). The span at 79–90 (APTPDPPGPAPS) shows a compositional bias: pro residues. Positions 133 to 246 (HTGGCHCGAV…EEVGGGDPGE (114 aa)) constitute a CENP-V/GFA domain. Zn(2+) is bound by residues C137, C139, C157, C159, C162, C201, and C204. Residues 240 to 272 (GGGDPGEEAAEEHKAIHKTSSQSAPACPREQEQ) are disordered.

It belongs to the Gfa family. It depends on Zn(2+) as a cofactor.

The sequence is that of Centromere protein V-like protein 1 from Homo sapiens (Human).